A 117-amino-acid chain; its full sequence is DNA-binding protein RdgB (117 aa).

Positions 82-102 (NHSALAKKYNVSLQWIYKIVR) form a DNA-binding region, H-T-H motif.

Belongs to the c/mor transcriptional regulatory family.

Regulates pectin lyase production in response to DNA damage. The chain is DNA-binding protein RdgB (rdgB) from Pectobacterium carotovorum subsp. carotovorum (Erwinia carotovora subsp. carotovora).